The primary structure comprises 244 residues: uncharacterized protein (244 aa).

In terms of domain architecture, HTH gntR-type spans 7-74 (VKEKDQVVAH…YHRGAFIERF (68 aa)). The H-T-H motif DNA-binding region spans 34 to 53 (RNEIAHGLGVSRVPIQEALV).

This is an uncharacterized protein from Mycobacterium tuberculosis (strain CDC 1551 / Oshkosh).